Here is a 295-residue protein sequence, read N- to C-terminus: Phosphatidylserine decarboxylase proenzyme (295 aa).

Catalysis depends on charge relay system; for autoendoproteolytic cleavage activity residues aspartate 113, histidine 169, and serine 256. Residue serine 256 is the Schiff-base intermediate with substrate; via pyruvic acid; for decarboxylase activity of the active site. A Pyruvic acid (Ser); by autocatalysis modification is found at serine 256.

Belongs to the phosphatidylserine decarboxylase family. PSD-B subfamily. Prokaryotic type II sub-subfamily. As to quaternary structure, heterodimer of a large membrane-associated beta subunit and a small pyruvoyl-containing alpha subunit. It depends on pyruvate as a cofactor. Post-translationally, is synthesized initially as an inactive proenzyme. Formation of the active enzyme involves a self-maturation process in which the active site pyruvoyl group is generated from an internal serine residue via an autocatalytic post-translational modification. Two non-identical subunits are generated from the proenzyme in this reaction, and the pyruvate is formed at the N-terminus of the alpha chain, which is derived from the carboxyl end of the proenzyme. The autoendoproteolytic cleavage occurs by a canonical serine protease mechanism, in which the side chain hydroxyl group of the serine supplies its oxygen atom to form the C-terminus of the beta chain, while the remainder of the serine residue undergoes an oxidative deamination to produce ammonia and the pyruvoyl prosthetic group on the alpha chain. During this reaction, the Ser that is part of the protease active site of the proenzyme becomes the pyruvoyl prosthetic group, which constitutes an essential element of the active site of the mature decarboxylase.

Its subcellular location is the cell membrane. It carries out the reaction a 1,2-diacyl-sn-glycero-3-phospho-L-serine + H(+) = a 1,2-diacyl-sn-glycero-3-phosphoethanolamine + CO2. Its pathway is phospholipid metabolism; phosphatidylethanolamine biosynthesis; phosphatidylethanolamine from CDP-diacylglycerol: step 2/2. In terms of biological role, catalyzes the formation of phosphatidylethanolamine (PtdEtn) from phosphatidylserine (PtdSer). This chain is Phosphatidylserine decarboxylase proenzyme, found in Clostridium botulinum (strain Kyoto / Type A2).